Consider the following 690-residue polypeptide: uncharacterized protein (690 aa).

This sequence to M.genitalium MG366 and M.pneumoniae MPN544.

This is an uncharacterized protein from Ureaplasma parvum serovar 3 (strain ATCC 700970).